The chain runs to 397 residues: Purine ribonucleoside efflux pump NepI (397 aa).

Residues 1 to 21 (MNENIAEKFRADGVARPNWSA) are Cytoplasmic-facing. A helical transmembrane segment spans residues 22–42 (VFAVAFCVACLITVEFLPVSL). The Periplasmic portion of the chain corresponds to 43-54 (LTPMAQDLGISE). Residues 55–75 (GIAGQSVTVTAFVAMFSSLFI) traverse the membrane as a helical segment. Over 76 to 85 (TQIIQATDRR) the chain is Cytoplasmic. A helical membrane pass occupies residues 86-106 (YIVILFAVLLTASCLMVSFAN). A topological domain (periplasmic) is located at residue Ser-107. A helical transmembrane segment spans residues 108–128 (FTLLLLGRACLGLALGGFWAM). Topologically, residues 129-147 (SASLTMRLVPARTVPKALS) are cytoplasmic. Residues 148-168 (VIFGAVSIALVIAAPLGSFLG) traverse the membrane as a helical segment. Topologically, residues 169–175 (GIIGWRN) are periplasmic. Residues 176–196 (VFNAAAVMGVLCVIWVVKSLP) traverse the membrane as a helical segment. The Cytoplasmic portion of the chain corresponds to 197–215 (SLPGEPSHQKQNMFSLLQR). A helical membrane pass occupies residues 216-236 (PGVMAGMIAIFMSFAGQFAFF). Residues 237–255 (TYIRPVYMNLAGFDVDGLT) are Periplasmic-facing. A helical membrane pass occupies residues 256–276 (LVLLSFGIASFVGTSFSSYVL). At 277–281 (KRSVK) the chain is on the cytoplasmic side. The chain crosses the membrane as a helical span at residues 282-302 (LALAGAPLLLALSALTLIVWG). The Periplasmic portion of the chain corresponds to 303–305 (SDK). A helical membrane pass occupies residues 306–326 (TVAAVIAIIWGLAFALVPVGW). Residues 327-343 (STWITRSLADQAEKAGS) are Cytoplasmic-facing. A helical transmembrane segment spans residues 344–364 (IQVAVIQLANTCGAAVGGYAL). Residues 365 to 366 (DN) lie on the Periplasmic side of the membrane. Residues 367–387 (FGLLSPLALSGCLMLLTALVV) form a helical membrane-spanning segment. Topologically, residues 388–397 (AAKVRITPMS) are cytoplasmic.

Belongs to the major facilitator superfamily. DHA1 family. NepI (TC 2.A.1.2.26) subfamily.

The protein localises to the cell inner membrane. It catalyses the reaction inosine(in) + H(+)(out) = inosine(out) + H(+)(in). The catalysed reaction is guanosine(in) + H(+)(out) = guanosine(out) + H(+)(in). Its function is as follows. Involved in the efflux of purine ribonucleosides, such as inosine and guanosine. The protein is Purine ribonucleoside efflux pump NepI of Salmonella enteritidis PT4 (strain P125109).